The chain runs to 462 residues: MNKRRIIEVLRHGQADDQVMVQGWLRTKRTLKDFSFVEVNDGSSLANLQVVLDGSLADYDRLLSQLQTGAALVVEGKLAPSPGKGQRVELKATKLELLGGADPGSYPLQKKRHSFEFLRTIGHLRPRTNTIGAVMRVRNACATAIHQFFQERGFLWVHTPIITASDCEGAGDLFKVTTLDLQRVPKNGEGIDYSQDFFGKQAYLTVSGQLEAEVMALAFQNVYTFGPTFRAENSNTSRHLAEFWMVEPEMAFCDLEGDRQWAEEFLKYIFKFVLEKCPEDMEFFDQRIDNTVLATADNIINNEFAWLTYSEAIKLLEKADQKFEYPVAWGVDLQSEHERYLAETVFKRPTIVTDYPKDIKAFYMRLNDDGKTVAAMDILAPKIGEIIGGSQREERLDILTQRMQEQGVPEEDLWWYLDLRRYGSVPHAGFGLGFERIVQFMTGMANIRDVIPFPRTPMNAEF.

Belongs to the class-II aminoacyl-tRNA synthetase family. As to quaternary structure, homodimer.

The protein resides in the cytoplasm. It carries out the reaction tRNA(Asn) + L-asparagine + ATP = L-asparaginyl-tRNA(Asn) + AMP + diphosphate + H(+). In Synechocystis sp. (strain ATCC 27184 / PCC 6803 / Kazusa), this protein is Asparagine--tRNA ligase.